The sequence spans 173 residues: Crossover junction endodeoxyribonuclease RuvC (173 aa).

Catalysis depends on residues Asp-8, Glu-69, and Asp-141. Positions 8, 69, and 141 each coordinate Mg(2+).

Belongs to the RuvC family. Homodimer which binds Holliday junction (HJ) DNA. The HJ becomes 2-fold symmetrical on binding to RuvC with unstacked arms; it has a different conformation from HJ DNA in complex with RuvA. In the full resolvosome a probable DNA-RuvA(4)-RuvB(12)-RuvC(2) complex forms which resolves the HJ. Requires Mg(2+) as cofactor.

The protein localises to the cytoplasm. The enzyme catalyses Endonucleolytic cleavage at a junction such as a reciprocal single-stranded crossover between two homologous DNA duplexes (Holliday junction).. Functionally, the RuvA-RuvB-RuvC complex processes Holliday junction (HJ) DNA during genetic recombination and DNA repair. Endonuclease that resolves HJ intermediates. Cleaves cruciform DNA by making single-stranded nicks across the HJ at symmetrical positions within the homologous arms, yielding a 5'-phosphate and a 3'-hydroxyl group; requires a central core of homology in the junction. The consensus cleavage sequence is 5'-(A/T)TT(C/G)-3'. Cleavage occurs on the 3'-side of the TT dinucleotide at the point of strand exchange. HJ branch migration catalyzed by RuvA-RuvB allows RuvC to scan DNA until it finds its consensus sequence, where it cleaves and resolves the cruciform DNA. This chain is Crossover junction endodeoxyribonuclease RuvC, found in Xylella fastidiosa (strain Temecula1 / ATCC 700964).